Consider the following 857-residue polypeptide: Protein STICHEL-like 2 (857 aa).

280–287 (GPRGTGKT) provides a ligand contact to ATP. Residues Cys299, Cys309, Cys312, and Cys315 each contribute to the Zn(2+) site. Residues 544–576 (LTRHTSEEEMQKLRNALKILSDAEKHLRASKNQ) adopt a coiled-coil conformation. Disordered stretches follow at residues 593–629 (SSFA…DAEK) and 787–845 (ASSR…SSRL). Residues 599 to 610 (ENGRNQINKDVE) show a composition bias toward basic and acidic residues. The span at 834–843 (QSETQNSKSS) shows a compositional bias: polar residues.

Belongs to the DnaX/STICHEL family.

The sequence is that of Protein STICHEL-like 2 from Arabidopsis thaliana (Mouse-ear cress).